The primary structure comprises 321 residues: Glucokinase (321 aa).

Residue Gly-10–Thr-15 coordinates ATP.

The protein belongs to the bacterial glucokinase family.

It is found in the cytoplasm. The catalysed reaction is D-glucose + ATP = D-glucose 6-phosphate + ADP + H(+). The polypeptide is Glucokinase (Marinobacter nauticus (strain ATCC 700491 / DSM 11845 / VT8) (Marinobacter aquaeolei)).